The chain runs to 559 residues: Probable 2-ketoarginine decarboxylase AruI (559 aa).

Glutamate 76 serves as a coordination point for thiamine diphosphate.

The protein belongs to the TPP enzyme family. The cofactor is thiamine diphosphate.

It catalyses the reaction 5-guanidino-2-oxopentanoate + H(+) = 4-guanidinobutanal + CO2. Its pathway is amino-acid degradation; L-arginine degradation. Its function is as follows. Catalyzes the decarboxylation of 2-ketoarginine, leading to the formation of 4-guanidinobutyraldehyde. The polypeptide is Probable 2-ketoarginine decarboxylase AruI (aruI) (Pseudomonas aeruginosa (strain ATCC 15692 / DSM 22644 / CIP 104116 / JCM 14847 / LMG 12228 / 1C / PRS 101 / PAO1)).